A 185-amino-acid chain; its full sequence is Potassium-transporting ATPase KdpC subunit (185 aa).

A helical membrane pass occupies residues 14–34 (ALSLLTGVAYPLALTGIAAVI).

It belongs to the KdpC family. As to quaternary structure, the system is composed of three essential subunits: KdpA, KdpB and KdpC.

It localises to the cell inner membrane. Its function is as follows. Part of the high-affinity ATP-driven potassium transport (or Kdp) system, which catalyzes the hydrolysis of ATP coupled with the electrogenic transport of potassium into the cytoplasm. This subunit acts as a catalytic chaperone that increases the ATP-binding affinity of the ATP-hydrolyzing subunit KdpB by the formation of a transient KdpB/KdpC/ATP ternary complex. The polypeptide is Potassium-transporting ATPase KdpC subunit (Cereibacter sphaeroides (strain ATCC 17023 / DSM 158 / JCM 6121 / CCUG 31486 / LMG 2827 / NBRC 12203 / NCIMB 8253 / ATH 2.4.1.) (Rhodobacter sphaeroides)).